The primary structure comprises 423 residues: Glucose-1-phosphate adenylyltransferase (423 aa).

Residues tyrosine 108, glycine 173, 188 to 189, and serine 207 contribute to the alpha-D-glucose 1-phosphate site; that span reads EK.

Belongs to the bacterial/plant glucose-1-phosphate adenylyltransferase family. Homotetramer.

It catalyses the reaction alpha-D-glucose 1-phosphate + ATP + H(+) = ADP-alpha-D-glucose + diphosphate. It participates in glycan biosynthesis; glycogen biosynthesis. In terms of biological role, involved in the biosynthesis of ADP-glucose, a building block required for the elongation reactions to produce glycogen. Catalyzes the reaction between ATP and alpha-D-glucose 1-phosphate (G1P) to produce pyrophosphate and ADP-Glc. The chain is Glucose-1-phosphate adenylyltransferase from Francisella tularensis subsp. novicida (strain U112).